Consider the following 204-residue polypeptide: Urease accessory protein UreG (204 aa).

Position 11 to 18 (11 to 18 (GPVGAGKT)) interacts with GTP.

This sequence belongs to the SIMIBI class G3E GTPase family. UreG subfamily. As to quaternary structure, homodimer. UreD, UreF and UreG form a complex that acts as a GTP-hydrolysis-dependent molecular chaperone, activating the urease apoprotein by helping to assemble the nickel containing metallocenter of UreC. The UreE protein probably delivers the nickel.

It localises to the cytoplasm. Functionally, facilitates the functional incorporation of the urease nickel metallocenter. This process requires GTP hydrolysis, probably effectuated by UreG. This is Urease accessory protein UreG from Staphylococcus aureus (strain Mu3 / ATCC 700698).